The primary structure comprises 291 residues: Pituitary-specific positive transcription factor 1 (291 aa).

Residues 5-13 (PFTSTDTFI) carry the 9aaTAD motif. In terms of domain architecture, POU-specific spans 124–198 (MDSPEIRELE…ILFKWLEEAE (75 aa)). The homeobox DNA-binding region spans 214-273 (KRKRRTTISIAAKDALERHFGEQNKPSSQEILRMAEELNLEKEVVRVWFCNRRQREKRVK).

This sequence belongs to the POU transcription factor family. Class-1 subfamily. As to quaternary structure, interacts with PITX1. Interacts with LHX3. Interacts with ELK1.

Its subcellular location is the nucleus. Transcription factor involved in the specification of the lactotrope, somatotrope, and thyrotrope phenotypes in the developing anterior pituitary. Activates growth hormone and prolactin genes. Specifically binds to the consensus sequence 5'-TAAAT-3'. In Ovis aries (Sheep), this protein is Pituitary-specific positive transcription factor 1 (POU1F1).